The sequence spans 495 residues: Tubulin epsilon and delta complex protein 1 (495 aa).

The stretch at 355 to 387 (GGELDLVVRELQALEEELREAAERRRAAWEAKA) forms a coiled coil. Residues 417 to 440 (CWERDGGPAQPHGPHRLVRREDGA) are disordered. The stretch at 452–480 (IRTLRSQEACLEAVLRRLQGQCRQELARL) forms a coiled coil.

In terms of assembly, interacts with TEDC2. Found in a complex with TEDC1, TEDC2, TUBE1 and TUBD1.

It is found in the cell projection. The protein resides in the cilium. The protein localises to the cytoplasm. Its subcellular location is the cytoskeleton. It localises to the microtubule organizing center. It is found in the centrosome. The protein resides in the centriole. Its function is as follows. Acts as a positive regulator of ciliary hedgehog signaling. Required for centriole stability. May play a role in counteracting perturbation of actin filaments, such as after treatment with the actin depolymerizing microbial metabolite Chivosazole F. This Homo sapiens (Human) protein is Tubulin epsilon and delta complex protein 1.